The chain runs to 274 residues: Pre-rRNA-processing protein PNO1 (274 aa).

Residues 1–70 (MVAPTALKKA…GSRKTHESKT (70 aa)) are disordered. A compositionally biased stretch (acidic residues) spans 33 to 48 (SIDEDDDDDVLLDDSD). Ser47 carries the post-translational modification Phosphoserine. Thr51 is modified (phosphothreonine). A compositionally biased stretch (basic and acidic residues) spans 51–69 (TAKEEVEGEEGSRKTHESK). One can recognise a KH domain in the interval 195–247 (GDHLSRAIGRIAGKDGKTKFAIENATRTRIVLADSKIHILGGFTHIRMARESV).

Belongs to the PNO1 family. In terms of assembly, component of the small ribosomal subunit, ribosomal RNA processing complex (SSU RRP complex). Interacts with NOB1.

It is found in the cytoplasm. The protein resides in the nucleus. It localises to the nucleolus. Functionally, required for small ribosomal subunit (SSU) synthesis. Has a role in the processing of early nucleolar and late cytoplasmic pre-RNA species. Recruits DIM1 to nucleolar pre-RNAs. Indirectly required for cleavage at the A2 site of the 20S pre-rRNA, forming 18S rRNA, and at A1 and A2 sites of other pre-rRNAs. This is Pre-rRNA-processing protein PNO1 (PNO1) from Saccharomyces cerevisiae (strain ATCC 204508 / S288c) (Baker's yeast).